A 269-amino-acid polypeptide reads, in one-letter code: tRNA (guanine-N(7)-)-methyltransferase (269 aa).

Residues 1–38 are disordered; sequence MDGVNDAANHTVESVPGRPSTASAPLEAGRRSPTGSRL. S-adenosyl-L-methionine contacts are provided by Glu-91, Glu-116, Asp-143, and Asp-166. The active site involves Asp-166. Substrate contacts are provided by residues Lys-170, Asp-202, and 247–250; that span reads TKFE.

It belongs to the class I-like SAM-binding methyltransferase superfamily. TrmB family.

The enzyme catalyses guanosine(46) in tRNA + S-adenosyl-L-methionine = N(7)-methylguanosine(46) in tRNA + S-adenosyl-L-homocysteine. The protein operates within tRNA modification; N(7)-methylguanine-tRNA biosynthesis. Its function is as follows. Catalyzes the formation of N(7)-methylguanine at position 46 (m7G46) in tRNA. The protein is tRNA (guanine-N(7)-)-methyltransferase of Nocardia farcinica (strain IFM 10152).